The following is a 159-amino-acid chain: 2-C-methyl-D-erythritol 2,4-cyclodiphosphate synthase (159 aa).

Positions 8 and 10 each coordinate a divalent metal cation. 4-CDP-2-C-methyl-D-erythritol 2-phosphate-binding positions include 8-10 and 34-35; these read DVH and HS. Residue histidine 42 coordinates a divalent metal cation. Residues 56–58, 61–65, 100–106, 132–135, phenylalanine 139, and arginine 142 each bind 4-CDP-2-C-methyl-D-erythritol 2-phosphate; these read DIG, FPDTD, AQEPKMA, and TTTE.

This sequence belongs to the IspF family. In terms of assembly, homotrimer. It depends on a divalent metal cation as a cofactor.

The catalysed reaction is 4-CDP-2-C-methyl-D-erythritol 2-phosphate = 2-C-methyl-D-erythritol 2,4-cyclic diphosphate + CMP. It functions in the pathway isoprenoid biosynthesis; isopentenyl diphosphate biosynthesis via DXP pathway; isopentenyl diphosphate from 1-deoxy-D-xylulose 5-phosphate: step 4/6. Involved in the biosynthesis of isopentenyl diphosphate (IPP) and dimethylallyl diphosphate (DMAPP), two major building blocks of isoprenoid compounds. Catalyzes the conversion of 4-diphosphocytidyl-2-C-methyl-D-erythritol 2-phosphate (CDP-ME2P) to 2-C-methyl-D-erythritol 2,4-cyclodiphosphate (ME-CPP) with a corresponding release of cytidine 5-monophosphate (CMP). This Alkaliphilus metalliredigens (strain QYMF) protein is 2-C-methyl-D-erythritol 2,4-cyclodiphosphate synthase.